A 318-amino-acid chain; its full sequence is Acetyl-coenzyme A carboxylase carboxyl transferase subunit alpha (318 aa).

In terms of domain architecture, CoA carboxyltransferase C-terminal spans 38-292 (KLEKRLAKLE…NKTITKSLHA (255 aa)).

It belongs to the AccA family. Acetyl-CoA carboxylase is a heterohexamer composed of biotin carboxyl carrier protein (AccB), biotin carboxylase (AccC) and two subunits each of ACCase subunit alpha (AccA) and ACCase subunit beta (AccD).

The protein resides in the cytoplasm. It catalyses the reaction N(6)-carboxybiotinyl-L-lysyl-[protein] + acetyl-CoA = N(6)-biotinyl-L-lysyl-[protein] + malonyl-CoA. The protein operates within lipid metabolism; malonyl-CoA biosynthesis; malonyl-CoA from acetyl-CoA: step 1/1. In terms of biological role, component of the acetyl coenzyme A carboxylase (ACC) complex. First, biotin carboxylase catalyzes the carboxylation of biotin on its carrier protein (BCCP) and then the CO(2) group is transferred by the carboxyltransferase to acetyl-CoA to form malonyl-CoA. The polypeptide is Acetyl-coenzyme A carboxylase carboxyl transferase subunit alpha (Listeria welshimeri serovar 6b (strain ATCC 35897 / DSM 20650 / CCUG 15529 / CIP 8149 / NCTC 11857 / SLCC 5334 / V8)).